The chain runs to 558 residues: Potassium-transporting ATPase potassium-binding subunit (558 aa).

Transmembrane regions (helical) follow at residues 1–21 (MEII…SGYL), 66–86 (FNGF…WLFL), 127–147 (MIVM…VCIA), 166–186 (IVRF…ILLM), 245–265 (IWSN…MLFL), 281–301 (ALIL…LTMW), 327–347 (FGAG…TGSV), 354–374 (LTPL…VFGG), 377–397 (VGLM…SLMV), 416–436 (IVLV…LAFM), 482–502 (ISTG…QLMI), and 531–551 (IVFI…LGPI).

This sequence belongs to the KdpA family. As to quaternary structure, the system is composed of three essential subunits: KdpA, KdpB and KdpC.

It localises to the cell membrane. Part of the high-affinity ATP-driven potassium transport (or Kdp) system, which catalyzes the hydrolysis of ATP coupled with the electrogenic transport of potassium into the cytoplasm. This subunit binds the extracellular potassium ions and delivers the ions to the membrane domain of KdpB through an intramembrane tunnel. The chain is Potassium-transporting ATPase potassium-binding subunit from Staphylococcus aureus (strain MSSA476).